Here is a 573-residue protein sequence, read N- to C-terminus: ATP-dependent RNA helicase RhlB (573 aa).

The Q motif signature appears at 9-37 (LTFSSFDLHPALVAGLESAGFTRCTPIQA). A Helicase ATP-binding domain is found at 40-220 (LPVALPGGDV…YEHMNEPEKL (181 aa)). 53–60 (AQTGTGKT) contacts ATP. Residues 166-169 (DEAD) carry the DEAD box motif. Residues 231–393 (RVRQRIYFPS…PVTTELLTPL (163 aa)) form the Helicase C-terminal domain. Residues 391–400 (TPLPRTPRAT) show a composition bias toward low complexity. Positions 391–559 (TPLPRTPRAT…AKPSGSPSLL (169 aa)) are disordered. Residues 402–411 (EGEEVDDDAG) show a composition bias toward acidic residues. The span at 419 to 432 (REAREQRAADEARR) shows a compositional bias: basic and acidic residues. Gly residues predominate over residues 435–449 (GRSGPGGASRSGSGG). The span at 450-461 (GRRDGAGADGKP) shows a compositional bias: basic and acidic residues. Low complexity predominate over residues 476-499 (PAAAPSETPVVVAAAAETPAVTAA). Residues 505-514 (PRKRRRRRNG) are compositionally biased toward basic residues. 2 stretches are compositionally biased toward low complexity: residues 516–528 (PVEG…ASTP) and 541–559 (VVAK…PSLL).

Belongs to the DEAD box helicase family. RhlB subfamily. In terms of assembly, component of the RNA degradosome, which is a multiprotein complex involved in RNA processing and mRNA degradation.

Its subcellular location is the cytoplasm. It catalyses the reaction ATP + H2O = ADP + phosphate + H(+). Functionally, DEAD-box RNA helicase involved in RNA degradation. Has RNA-dependent ATPase activity and unwinds double-stranded RNA. In Xanthomonas campestris pv. campestris (strain B100), this protein is ATP-dependent RNA helicase RhlB.